Reading from the N-terminus, the 350-residue chain is S-adenosylmethionine:tRNA ribosyltransferase-isomerase (350 aa).

This sequence belongs to the QueA family. Monomer.

It is found in the cytoplasm. The catalysed reaction is 7-aminomethyl-7-carbaguanosine(34) in tRNA + S-adenosyl-L-methionine = epoxyqueuosine(34) in tRNA + adenine + L-methionine + 2 H(+). It participates in tRNA modification; tRNA-queuosine biosynthesis. Its function is as follows. Transfers and isomerizes the ribose moiety from AdoMet to the 7-aminomethyl group of 7-deazaguanine (preQ1-tRNA) to give epoxyqueuosine (oQ-tRNA). The chain is S-adenosylmethionine:tRNA ribosyltransferase-isomerase from Aliivibrio fischeri (strain ATCC 700601 / ES114) (Vibrio fischeri).